The chain runs to 359 residues: Stearoyl-CoA desaturase (359 aa).

The Cytoplasmic segment spans residues Met1 to Val72. The chain crosses the membrane as a helical span at residues Trp73–Ile93. Residue Asn75 coordinates substrate. At Pro94–Lys97 the chain is on the lumenal side. Residues Ile98–Gly118 form a helical membrane-spanning segment. Residues Val119–Tyr217 lie on the Cytoplasmic side of the membrane. Fe cation is bound by residues His120 and His125. A Histidine box-1 motif is present at residues His120 to His125. Substrate contacts are provided by Asn148, Arg155, and Asp156. The Fe cation site is built by His157, His160, and His161. Residues His157–His161 carry the Histidine box-2 motif. Substrate is bound by residues Arg188 and Lys189. A Phosphoserine modification is found at Ser203. A helical membrane pass occupies residues Tyr218 to Leu237. Over Trp238–Thr241 the chain is Lumenal. Residues Phe242–Leu263 form a helical membrane-spanning segment. Position 262 (Trp262) interacts with substrate. Residues Val264 to Gly359 are Cytoplasmic-facing. Fe cation is bound by residues His269, His298, His301, and His302. A Histidine box-3 motif is present at residues His298 to His302.

Belongs to the fatty acid desaturase type 1 family. The cofactor is Fe(2+).

The protein localises to the endoplasmic reticulum membrane. The catalysed reaction is octadecanoyl-CoA + 2 Fe(II)-[cytochrome b5] + O2 + 2 H(+) = (9Z)-octadecenoyl-CoA + 2 Fe(III)-[cytochrome b5] + 2 H2O. The enzyme catalyses hexadecanoyl-CoA + 2 Fe(II)-[cytochrome b5] + O2 + 2 H(+) = (9Z)-hexadecenoyl-CoA + 2 Fe(III)-[cytochrome b5] + 2 H2O. Stearoyl-CoA desaturase that utilizes O(2) and electrons from reduced cytochrome b5 to introduce the first double bond into saturated fatty acyl-CoA substrates. Catalyzes the insertion of a cis double bond at the delta-9 position into fatty acyl-CoA substrates including palmitoyl-CoA and stearoyl-CoA. Gives rise to a mixture of 16:1 and 18:1 unsaturated fatty acids. Plays an important role in lipid biosynthesis. Plays an important role in regulating the expression of genes that are involved in lipogenesis and in regulating mitochondrial fatty acid oxidation. Plays an important role in body energy homeostasis. Contributes to the biosynthesis of membrane phospholipids, cholesterol esters and triglycerides. The protein is Stearoyl-CoA desaturase (SCD) of Capra hircus (Goat).